The chain runs to 255 residues: Ribosomal RNA small subunit methyltransferase G 2 (255 aa).

Positions 90, 95, and 155 each coordinate S-adenosyl-L-methionine. The span at E233–S245 shows a compositional bias: acidic residues. Positions E233–Y255 are disordered. Residues N246–Y255 show a composition bias toward basic and acidic residues.

The protein belongs to the methyltransferase superfamily. RNA methyltransferase RsmG family.

The protein resides in the cytoplasm. It carries out the reaction guanosine(527) in 16S rRNA + S-adenosyl-L-methionine = N(7)-methylguanosine(527) in 16S rRNA + S-adenosyl-L-homocysteine. Its function is as follows. Specifically methylates the N7 position of guanine in position 527 of 16S rRNA. This chain is Ribosomal RNA small subunit methyltransferase G 2, found in Bdellovibrio bacteriovorus (strain ATCC 15356 / DSM 50701 / NCIMB 9529 / HD100).